The sequence spans 100 residues: Urease subunit gamma (100 aa).

This sequence belongs to the urease gamma subunit family. Heterotrimer of UreA (gamma), UreB (beta) and UreC (alpha) subunits. Three heterotrimers associate to form the active enzyme.

It localises to the cytoplasm. The catalysed reaction is urea + 2 H2O + H(+) = hydrogencarbonate + 2 NH4(+). It functions in the pathway nitrogen metabolism; urea degradation; CO(2) and NH(3) from urea (urease route): step 1/1. The sequence is that of Urease subunit gamma from Yersinia aldovae.